The primary structure comprises 429 residues: Enolase (429 aa).

Q164 lines the (2R)-2-phosphoglycerate pocket. E206 serves as the catalytic Proton donor. Mg(2+) is bound by residues D243, E286, and D313. Positions 338, 367, 368, and 389 each coordinate (2R)-2-phosphoglycerate. K338 (proton acceptor) is an active-site residue.

It belongs to the enolase family. Requires Mg(2+) as cofactor.

The protein localises to the cytoplasm. The protein resides in the secreted. It localises to the cell surface. It catalyses the reaction (2R)-2-phosphoglycerate = phosphoenolpyruvate + H2O. Its pathway is carbohydrate degradation; glycolysis; pyruvate from D-glyceraldehyde 3-phosphate: step 4/5. Catalyzes the reversible conversion of 2-phosphoglycerate (2-PG) into phosphoenolpyruvate (PEP). It is essential for the degradation of carbohydrates via glycolysis. The protein is Enolase of Thermotoga sp. (strain RQ2).